Reading from the N-terminus, the 183-residue chain is Interleukin-24 (183 aa).

An N-terminal signal peptide occupies residues 1-28; the sequence is MQTSLRQQILPGLSLILLVLNQVPELQG. An intrachain disulfide couples Cys-36 to Cys-83. Asn-76 carries an N-linked (GlcNAc...) asparagine glycan. Lys-99 participates in a covalent cross-link: Glycyl lysine isopeptide (Lys-Gly) (interchain with G-Cter in ubiquitin).

It belongs to the IL-10 family. Glycosylated. In terms of processing, ubiquitination at Lys-99 promotes proteasomal degradation.

The protein resides in the secreted. Its function is as follows. Multifunctional cytokine mainly produced by T-cells that plays a regulatory role in immune response, tissue homeostasis, host defense, and oncogenesis. Possesses antiviral functions and induces the type I interferon response during influenza infection. Signals through two receptor complexes IL20RA/IL20RB or IL20RB/IL22RA1. In turn, stimulates the JAK1-STAT3 and MAPK pathways and promotes the secretion of pro-inflammatory mediators including IL8 and MMP1. Intracellularly, maintains endoplasmic reticulum homeostasis by restricting the eIF2alpha-CHOP pathway-mediated stress signal. In addition, acts as a quality control mechanism for the ubiquitin proteasome system by alerting the cell to proteasome dysfunction through activation of PKR/EIF2AK2. The chain is Interleukin-24 (Il24) from Rattus norvegicus (Rat).